Consider the following 451-residue polypeptide: Uronate isomerase (451 aa).

Belongs to the metallo-dependent hydrolases superfamily. Uronate isomerase family.

It carries out the reaction D-glucuronate = D-fructuronate. The catalysed reaction is aldehydo-D-galacturonate = keto-D-tagaturonate. Its pathway is carbohydrate metabolism; pentose and glucuronate interconversion. This is Uronate isomerase from Thermotoga neapolitana (strain ATCC 49049 / DSM 4359 / NBRC 107923 / NS-E).